The chain runs to 252 residues: UPF0246 protein LJ_0535 (252 aa).

Belongs to the UPF0246 family.

In Lactobacillus johnsonii (strain CNCM I-12250 / La1 / NCC 533), this protein is UPF0246 protein LJ_0535.